A 656-amino-acid polypeptide reads, in one-letter code: Chaperone protein DnaK (656 aa).

Disordered regions lie at residues 488-532 (EMQE…DAVD) and 579-656 (YQQQ…DEDE). A compositionally biased stretch (basic and acidic residues) spans 492 to 513 (EAEKHAEEDEKRRERIEARNEA). Residues 523–532 (LLDENEDAVD) show a composition bias toward acidic residues. Positions 584 to 635 (GEGGAGAGAGAAGGMGGAGPGGMGGAGPGGMGGAGPGGMGGAGPGAGAGQQG) are enriched in gly residues. Residues 636–656 (DGEEFVDADFEDVDDEDDEDE) are compositionally biased toward acidic residues.

Belongs to the heat shock protein 70 family.

Functionally, acts as a chaperone. The protein is Chaperone protein DnaK of Natronomonas pharaonis (strain ATCC 35678 / DSM 2160 / CIP 103997 / JCM 8858 / NBRC 14720 / NCIMB 2260 / Gabara) (Halobacterium pharaonis).